The primary structure comprises 236 residues: Probable transcriptional activator protein TraR (236 aa).

One can recognise an HTH luxR-type domain in the interval 169 to 234; it reads VLNPKQMLSP…QLVAIAKDRG (66 aa). The segment at residues 193–212 is a DNA-binding region (H-T-H motif); that stretch reads ASVTANLTGINARTVQHYLD.

It belongs to the autoinducer-regulated transcriptional regulatory protein family.

In terms of biological role, positive regulation of conjugal transfer. TraR activates target genes in the presence of AAI and also activates traR and traI themselves. In Sinorhizobium fredii (strain NBRC 101917 / NGR234), this protein is Probable transcriptional activator protein TraR (traR).